A 272-amino-acid chain; its full sequence is Low-density lipoprotein receptor class A domain-containing protein 2 (272 aa).

An N-terminal signal peptide occupies residues 1 to 25 (MEACCLLQLPQRLLLLGAAALTATA). Residues 26–233 (LETADLAELC…GSTDAHTSRS (208 aa)) lie on the Extracellular side of the membrane. N-linked (GlcNAc...) asparagine glycosylation is present at Asn97. The 43-residue stretch at 172 to 214 (PCGAYFRCQNGRCIPSSLVCDPWGMDNCGDGSDQGSWSPADCR) folds into the LDL-receptor class A domain. 3 disulfides stabilise this stretch: Cys173–Cys184, Cys179–Cys199, and Cys191–Cys213. A disordered region spans residues 202-272 (GSDQGSWSPA…QDAALEGSTE (71 aa)). Residues 220-236 (PSQTGSTDAHTSRSLTP) show a composition bias toward polar residues. A helical transmembrane segment spans residues 234-250 (LTPSPALGSAGSLWIAA). The Cytoplasmic segment spans residues 251–272 (ERSSPAGRDPTRQDAALEGSTE).

This sequence belongs to the LDLR family.

The protein localises to the membrane. This Homo sapiens (Human) protein is Low-density lipoprotein receptor class A domain-containing protein 2 (LDLRAD2).